Reading from the N-terminus, the 118-residue chain is Thioredoxin H-type 2 (118 aa).

In terms of domain architecture, Thioredoxin spans 2 to 113 (AEEGQVIGVH…LQQTIAKHIS (112 aa)). Active-site nucleophile residues include Cys-39 and Cys-42. Residues Cys-39 and Cys-42 are joined by a disulfide bond.

The protein belongs to the thioredoxin family. Plant H-type subfamily.

It localises to the cytoplasm. Functionally, participates in various redox reactions through the reversible oxidation of the active center dithiol to a disulfide. The H form is known to activate a number of cytosolic enzymes. The polypeptide is Thioredoxin H-type 2 (Nicotiana tabacum (Common tobacco)).